A 178-amino-acid polypeptide reads, in one-letter code: Cytochrome b6-f complex iron-sulfur subunit (178 aa).

The chain crosses the membrane as a helical span at residues 20-42 (LLTFGTATGVALGALYPVANYFM). Residues 65–161 (KTGWLANHQA…VDVDDDAVLV (97 aa)) enclose the Rieske domain. Residues cysteine 107, histidine 109, cysteine 125, and histidine 128 each contribute to the [2Fe-2S] cluster site. Cysteine 112 and cysteine 127 form a disulfide bridge.

Belongs to the Rieske iron-sulfur protein family. In terms of assembly, the 4 large subunits of the cytochrome b6-f complex are cytochrome b6, subunit IV (17 kDa polypeptide, PetD), cytochrome f and the Rieske protein, while the 4 small subunits are PetG, PetL, PetM and PetN. The complex functions as a dimer. Requires [2Fe-2S] cluster as cofactor.

It is found in the cellular thylakoid membrane. It carries out the reaction 2 oxidized [plastocyanin] + a plastoquinol + 2 H(+)(in) = 2 reduced [plastocyanin] + a plastoquinone + 4 H(+)(out). Its function is as follows. Component of the cytochrome b6-f complex, which mediates electron transfer between photosystem II (PSII) and photosystem I (PSI), cyclic electron flow around PSI, and state transitions. This Prochlorococcus marinus (strain MIT 9515) protein is Cytochrome b6-f complex iron-sulfur subunit.